We begin with the raw amino-acid sequence, 153 residues long: Ubiquitin/ISG15-conjugating enzyme E2 L6 (153 aa).

Residues 2-149 (TASKRVAKEL…AEEFTLQYGV (148 aa)) enclose the UBC core domain. The Glycyl thioester intermediate role is filled by Cys86.

The protein belongs to the ubiquitin-conjugating enzyme family. In terms of assembly, interacts with RNF19A, RNF19B and RNF144B. Interacts with FLT3 (tyrosine phosphorylated). In terms of processing, ISGylated.

The catalysed reaction is S-ubiquitinyl-[E1 ubiquitin-activating enzyme]-L-cysteine + [E2 ubiquitin-conjugating enzyme]-L-cysteine = [E1 ubiquitin-activating enzyme]-L-cysteine + S-ubiquitinyl-[E2 ubiquitin-conjugating enzyme]-L-cysteine.. It participates in protein modification; protein ubiquitination. In terms of biological role, catalyzes the covalent attachment of ubiquitin to other proteins. Functions in the E6/E6-AP-induced ubiquitination of p53/TP53. Promotes ubiquitination and subsequent proteasomal degradation of FLT3. This chain is Ubiquitin/ISG15-conjugating enzyme E2 L6 (Ube2l6), found in Rattus norvegicus (Rat).